The chain runs to 160 residues: Large ribosomal subunit protein eL21B (160 aa).

The disordered stretch occupies residues alanine 114 to phenylalanine 140.

It belongs to the eukaryotic ribosomal protein eL21 family. Component of the large ribosomal subunit (LSU). Mature yeast ribosomes consist of a small (40S) and a large (60S) subunit. The 40S small subunit contains 1 molecule of ribosomal RNA (18S rRNA) and at least 33 different proteins. The large 60S subunit contains 3 rRNA molecules (25S, 5.8S and 5S rRNA) and at least 46 different proteins.

The protein resides in the cytoplasm. Its function is as follows. Component of the ribosome, a large ribonucleoprotein complex responsible for the synthesis of proteins in the cell. The small ribosomal subunit (SSU) binds messenger RNAs (mRNAs) and translates the encoded message by selecting cognate aminoacyl-transfer RNA (tRNA) molecules. The large subunit (LSU) contains the ribosomal catalytic site termed the peptidyl transferase center (PTC), which catalyzes the formation of peptide bonds, thereby polymerizing the amino acids delivered by tRNAs into a polypeptide chain. The nascent polypeptides leave the ribosome through a tunnel in the LSU and interact with protein factors that function in enzymatic processing, targeting, and the membrane insertion of nascent chains at the exit of the ribosomal tunnel. This chain is Large ribosomal subunit protein eL21B (rpl2102), found in Schizosaccharomyces pombe (strain 972 / ATCC 24843) (Fission yeast).